The primary structure comprises 428 residues: Histidine--tRNA ligase (428 aa).

This sequence belongs to the class-II aminoacyl-tRNA synthetase family. In terms of assembly, homodimer.

The protein resides in the cytoplasm. The catalysed reaction is tRNA(His) + L-histidine + ATP = L-histidyl-tRNA(His) + AMP + diphosphate + H(+). The sequence is that of Histidine--tRNA ligase from Staphylococcus carnosus (strain TM300).